The following is a 260-amino-acid chain: MRKLKSFTFIALTAFAITACSGSKDVEQRPEQELYNVGQTHLQNGDYSQAIRYLDAVRSRFPGSSYSEQTLLNLIYANYKTQDYTQTLVLADRFFQQYPTSRNLDYVLYMAGLTNAALGDNYIQDLFRIDRATRESSSIKAAFANFQTLVQNFPNSPYAQDALARMAYIKASLARHELAIAKFYAKRDAHVAVANRVVGMLQQYPDTQATYEALPLMQEAYEKMNLNDLAAKTAAIIEANKGRTFAEIEKPAEPEGLLKQ.

Positions 1–19 (MRKLKSFTFIALTAFAITA) are cleaved as a signal peptide. Residue Cys-20 is the site of N-palmitoyl cysteine attachment. Cys-20 is lipidated: S-diacylglycerol cysteine.

It belongs to the BamD family. As to quaternary structure, part of the Bam complex.

The protein resides in the cell outer membrane. Part of the outer membrane protein assembly complex, which is involved in assembly and insertion of beta-barrel proteins into the outer membrane. The sequence is that of Outer membrane protein assembly factor BamD from Pasteurella multocida (strain Pm70).